The sequence spans 161 residues: Endoribonuclease YbeY (161 aa).

The Zn(2+) site is built by His-121, His-125, and His-131.

The protein belongs to the endoribonuclease YbeY family. Requires Zn(2+) as cofactor.

Its subcellular location is the cytoplasm. In terms of biological role, single strand-specific metallo-endoribonuclease involved in late-stage 70S ribosome quality control and in maturation of the 3' terminus of the 16S rRNA. The polypeptide is Endoribonuclease YbeY (Xylella fastidiosa (strain M23)).